The following is a 204-amino-acid chain: Protein Mis18-alpha (204 aa).

Phosphoserine is present on residues serine 13, serine 16, and serine 17. The Mis18 domain maps to 51–149 (PLVFLCARCR…SVEAVESYTL (99 aa)). Residues cysteine 56, cysteine 59, cysteine 112, and cysteine 115 each coordinate Zn(2+). Lysine 133 is covalently cross-linked (Glycyl lysine isopeptide (Lys-Gly) (interchain with G-Cter in SUMO2)). Serine 204 carries the post-translational modification Phosphoserine.

The protein belongs to the mis18 family. In terms of assembly, homodimer, and heterodimer with OIP5/MIS18B. Identified in a complex containing MIS18A, OIP5/MIS18B, MIS18BP1, RBBP7 and RBBP4.

It localises to the nucleus. The protein localises to the chromosome. Its subcellular location is the centromere. Required for recruitment of CENPA to centromeres and normal chromosome segregation during mitosis. In Mus musculus (Mouse), this protein is Protein Mis18-alpha (Mis18a).